Consider the following 144-residue polypeptide: Transcriptional regulator SlyA (144 aa).

Positions 2–135 (ESPLGSDLAR…LIKLVAKLEH (134 aa)) constitute an HTH marR-type domain. The segment at residues 49-72 (QIQLAKAIGIEQPSLVRTLDQLED) is a DNA-binding region (H-T-H motif).

It belongs to the SlyA family. Homodimer.

In terms of biological role, transcription regulator that can specifically activate or repress expression of target genes. Required to activate expression of virulent genes. This Salmonella choleraesuis (strain SC-B67) protein is Transcriptional regulator SlyA.